Reading from the N-terminus, the 433-residue chain is Serine--tRNA ligase (433 aa).

Residue threonine 239–glutamate 241 coordinates L-serine. ATP is bound at residue arginine 270–glutamate 272. An L-serine-binding site is contributed by glutamate 293. Residue glutamate 357 to serine 360 participates in ATP binding. Serine 393 serves as a coordination point for L-serine.

Belongs to the class-II aminoacyl-tRNA synthetase family. Type-1 seryl-tRNA synthetase subfamily. As to quaternary structure, homodimer. The tRNA molecule binds across the dimer.

The protein resides in the cytoplasm. It carries out the reaction tRNA(Ser) + L-serine + ATP = L-seryl-tRNA(Ser) + AMP + diphosphate + H(+). The enzyme catalyses tRNA(Sec) + L-serine + ATP = L-seryl-tRNA(Sec) + AMP + diphosphate + H(+). Its pathway is aminoacyl-tRNA biosynthesis; selenocysteinyl-tRNA(Sec) biosynthesis; L-seryl-tRNA(Sec) from L-serine and tRNA(Sec): step 1/1. Its function is as follows. Catalyzes the attachment of serine to tRNA(Ser). Is also able to aminoacylate tRNA(Sec) with serine, to form the misacylated tRNA L-seryl-tRNA(Sec), which will be further converted into selenocysteinyl-tRNA(Sec). The chain is Serine--tRNA ligase from Sorangium cellulosum (strain So ce56) (Polyangium cellulosum (strain So ce56)).